Here is a 103-residue protein sequence, read N- to C-terminus: L-rhamnose mutarotase (103 aa).

Residue Tyr-18 participates in substrate binding. The active-site Proton donor is His-22. Substrate-binding positions include Tyr-41 and 76 to 77 (WW).

Belongs to the rhamnose mutarotase family. As to quaternary structure, homodimer.

It is found in the cytoplasm. The enzyme catalyses alpha-L-rhamnose = beta-L-rhamnose. The protein operates within carbohydrate metabolism; L-rhamnose metabolism. Functionally, involved in the anomeric conversion of L-rhamnose. The sequence is that of L-rhamnose mutarotase from Enterococcus faecalis (strain ATCC 700802 / V583).